Consider the following 229-residue polypeptide: Large ribosomal subunit protein uL1 (229 aa).

This sequence belongs to the universal ribosomal protein uL1 family. As to quaternary structure, part of the 50S ribosomal subunit.

Its function is as follows. Binds directly to 23S rRNA. The L1 stalk is quite mobile in the ribosome, and is involved in E site tRNA release. Functionally, protein L1 is also a translational repressor protein, it controls the translation of the L11 operon by binding to its mRNA. The chain is Large ribosomal subunit protein uL1 from Streptococcus uberis (strain ATCC BAA-854 / 0140J).